The chain runs to 97 residues: Defensin-like protein 246 (97 aa).

Positions methionine 1 to glycine 24 are cleaved as a signal peptide. Intrachain disulfides connect cysteine 39-cysteine 96, cysteine 50-cysteine 79, cysteine 58-cysteine 89, and cysteine 77-cysteine 91.

Belongs to the DEFL family. As to expression, flower buds and stems.

Its subcellular location is the secreted. The sequence is that of Defensin-like protein 246 (SCRL5) from Arabidopsis thaliana (Mouse-ear cress).